The chain runs to 386 residues: Lipoyl synthase, mitochondrial (386 aa).

Cysteine 110, cysteine 115, cysteine 121, cysteine 141, cysteine 145, cysteine 148, and serine 356 together coordinate [4Fe-4S] cluster. Residues 124 to 345 form the Radical SAM core domain; sequence GNDKSKATAT…KEQALEMGFL (222 aa).

It belongs to the radical SAM superfamily. Lipoyl synthase family. Requires [4Fe-4S] cluster as cofactor.

The protein localises to the mitochondrion. It catalyses the reaction [[Fe-S] cluster scaffold protein carrying a second [4Fe-4S](2+) cluster] + N(6)-octanoyl-L-lysyl-[protein] + 2 oxidized [2Fe-2S]-[ferredoxin] + 2 S-adenosyl-L-methionine + 4 H(+) = [[Fe-S] cluster scaffold protein] + N(6)-[(R)-dihydrolipoyl]-L-lysyl-[protein] + 4 Fe(3+) + 2 hydrogen sulfide + 2 5'-deoxyadenosine + 2 L-methionine + 2 reduced [2Fe-2S]-[ferredoxin]. The protein operates within protein modification; protein lipoylation via endogenous pathway; protein N(6)-(lipoyl)lysine from octanoyl-[acyl-carrier-protein]: step 2/2. Catalyzes the radical-mediated insertion of two sulfur atoms into the C-6 and C-8 positions of the octanoyl moiety bound to the lipoyl domains of lipoate-dependent enzymes, thereby converting the octanoylated domains into lipoylated derivatives. This is Lipoyl synthase, mitochondrial from Zygosaccharomyces rouxii (strain ATCC 2623 / CBS 732 / NBRC 1130 / NCYC 568 / NRRL Y-229).